The primary structure comprises 228 residues: Glycosylphosphatidylinositol-anchored high density lipoprotein-binding protein 1 (228 aa).

The first 22 residues, 1-22 (MKALRAVLLILLLSGQPGSGWA), serve as a signal peptide directing secretion. Positions 21–32 (WAQEDGDADPEP) are disordered. An important for LPL transport to the lumenal surface of endothelial cells region spans residues 24–48 (EDGDADPEPENYNYDDDDDEEEEEE). Residues 24 to 49 (EDGDADPEPENYNYDDDDDEEEEEET) show a composition bias toward acidic residues. At Tyr-35 the chain carries Sulfotyrosine. A UPAR/Ly6 domain is found at 61–148 (LQCYFCQVLH…PWQNPQVQNP (88 aa)). Cystine bridges form between Cys-63-Cys-88, Cys-66-Cys-75, Cys-81-Cys-109, Cys-113-Cys-129, and Cys-130-Cys-135. Asn-76 carries an N-linked (GlcNAc...) asparagine glycan. An important for interaction with LPL region spans residues 102 to 108 (LTTYSMW). The interval 145–200 (VQNPLGGRADSPLESGTRHPQGGKFSHPQVVKAAHPQSDGANLPKSGKANQPQGSG) is disordered. Gly-198 carries GPI-anchor amidated glycine lipidation. Residues 199–228 (SGAGYPSGWTKFGNIALLLSFFTCLWASGA) constitute a propeptide, removed in mature form.

Mostly monomer, but also homodimer and homooligomer. Interacts with lipoprotein lipase (LPL). Interacts with high affinity with high-density lipoprotein (HDL). Interacts with chylomicrons. Interacts with APOA5. In terms of processing, glycosylation of Asn-76 is critical for cell surface localization. Post-translationally, sulfation of a Tyr in the N-terminal acidic region increases the affinity for LPL. Detected in fat tissue. Detected on the luminal surface of capillary endothelial cells in heart, skeletal muscle and brown adipose tissue (at protein level). Detected in heart and brown adipose tissue. Expressed at lower levels in lung and liver.

It localises to the apical cell membrane. The protein resides in the basolateral cell membrane. Its subcellular location is the cell membrane. Its function is as follows. Mediates the transport of lipoprotein lipase LPL from the basolateral to the apical surface of endothelial cells in capillaries. Anchors LPL on the surface of endothelial cells in the lumen of blood capillaries. Thereby, plays an important role in lipolytic processing of chylomicrons by LPL, triglyceride metabolism and lipid homeostasis. Binds chylomicrons and phospholipid particles that contain APOA5. Binds high-density lipoprotein (HDL) and plays a role in the uptake of lipids from HDL. This is Glycosylphosphatidylinositol-anchored high density lipoprotein-binding protein 1 from Mus musculus (Mouse).